Reading from the N-terminus, the 52-residue chain is Alpha-crystallin B chain (52 aa).

Belongs to the small heat shock protein (HSP20) family. Homodimer. Aggregates with homologous proteins, including alpha-A-crystallin and the small heat shock protein HSPB1, to form large heteromeric complexes.

May contribute to the transparency and refractive index of the lens. The polypeptide is Alpha-crystallin B chain (CRYAB) (Turdus merula (Common blackbird)).